A 150-amino-acid chain; its full sequence is MSLKNKFKNFFSLDDEEYEYEYIETDREEIPEEHESKDRTAYQSKAAGKQNVVSLQSVQKSSKVVLSEPRVYAEAQEIADHIKNRRAVVVNLQRIQHDQAKRIVDFLSGTVYALGGDIQRIGADIFLCTPENVDVSGTISELIEEEHQRW.

A disordered region spans residues 26 to 45 (DREEIPEEHESKDRTAYQSK).

The protein belongs to the SepF family. In terms of assembly, homodimer. Interacts with FtsZ.

It is found in the cytoplasm. Cell division protein that is part of the divisome complex and is recruited early to the Z-ring. Probably stimulates Z-ring formation, perhaps through the cross-linking of FtsZ protofilaments. Its function overlaps with FtsA. The polypeptide is Cell division protein SepF (Bacillus licheniformis (strain ATCC 14580 / DSM 13 / JCM 2505 / CCUG 7422 / NBRC 12200 / NCIMB 9375 / NCTC 10341 / NRRL NRS-1264 / Gibson 46)).